Here is a 230-residue protein sequence, read N- to C-terminus: Octanoyltransferase (230 aa).

A BPL/LPL catalytic domain is found at 38-215 (AGGADTLLLL…AVCAALDGVL (178 aa)). Residues 76 to 83 (RGGKITWH), 145 to 147 (AIG), and 158 to 160 (GFA) contribute to the substrate site. Residue C176 is the Acyl-thioester intermediate of the active site.

This sequence belongs to the LipB family.

It is found in the cytoplasm. It catalyses the reaction octanoyl-[ACP] + L-lysyl-[protein] = N(6)-octanoyl-L-lysyl-[protein] + holo-[ACP] + H(+). Its pathway is protein modification; protein lipoylation via endogenous pathway; protein N(6)-(lipoyl)lysine from octanoyl-[acyl-carrier-protein]: step 1/2. In terms of biological role, catalyzes the transfer of endogenously produced octanoic acid from octanoyl-acyl-carrier-protein onto the lipoyl domains of lipoate-dependent enzymes. Lipoyl-ACP can also act as a substrate although octanoyl-ACP is likely to be the physiological substrate. The protein is Octanoyltransferase of Mycobacterium bovis (strain BCG / Tokyo 172 / ATCC 35737 / TMC 1019).